A 524-amino-acid chain; its full sequence is Cytochrome P450 monooxygenase oblB (524 aa).

A run of 3 helical transmembrane segments spans residues 18 to 38 (ILNA…GLVI), 225 to 245 (FHSG…IHLI), and 322 to 342 (VLIG…VYYI). Cysteine 466 contacts heme.

Belongs to the cytochrome P450 family. Heme serves as cofactor.

Its subcellular location is the membrane. It carries out the reaction ophiobolin F + 4 reduced [NADPH--hemoprotein reductase] + 4 O2 = ophiobolin C + 4 oxidized [NADPH--hemoprotein reductase] + 6 H2O + 4 H(+). It participates in secondary metabolite biosynthesis; terpenoid biosynthesis. Its function is as follows. Cytochrome P450 monooxygenase; part of the gene cluster that mediates the biosynthesis of the sesterterpenes ophiobolins, fungal phytotoxins with potential anti-cancer activities. The first step of the pathway is performed by the sesterterpene synthase oblA that possesses both prenyl transferase and terpene cyclase activity, converting isopentenyl diphosphate and dimethylallyl diphosphate into geranylfarnesyl diphosphate (GFPP) and further converting GFPP into ophiobolin F, respectively. Other sesterterpenoids (C(25) terpenoids) are found as minor products of oblA. The cytochrome P450 monooxygenase oblB then catalyzes a four-step oxidative transformation of ophiobolin F to yield ophiobolin C. The FAD-dependent oxidoreductase oblC might be involved in a later oxidation step that produces ophiobolin A. In Cochliobolus heterostrophus (strain C5 / ATCC 48332 / race O) (Southern corn leaf blight fungus), this protein is Cytochrome P450 monooxygenase oblB.